The following is a 390-amino-acid chain: uncharacterized protein (390 aa).

This is an uncharacterized protein from Archaeoglobus fulgidus (strain ATCC 49558 / DSM 4304 / JCM 9628 / NBRC 100126 / VC-16).